The sequence spans 41 residues: Photosystem I reaction center subunit IX (41 aa).

Residues 7–27 (YLSTAPVVAFAWITITAGLLI) traverse the membrane as a helical segment.

It belongs to the PsaJ family.

The protein localises to the plastid. It localises to the chloroplast thylakoid membrane. Functionally, may help in the organization of the PsaE and PsaF subunits. This Oedogonium cardiacum (Filamentous green alga) protein is Photosystem I reaction center subunit IX.